Here is a 238-residue protein sequence, read N- to C-terminus: Large ribosomal subunit protein uL1 (238 aa).

Belongs to the universal ribosomal protein uL1 family. As to quaternary structure, part of the 50S ribosomal subunit.

Binds directly to 23S rRNA. The L1 stalk is quite mobile in the ribosome, and is involved in E site tRNA release. Its function is as follows. Protein L1 is also a translational repressor protein, it controls the translation of the L11 operon by binding to its mRNA. In Rickettsia prowazekii (strain Madrid E), this protein is Large ribosomal subunit protein uL1.